A 669-amino-acid chain; its full sequence is DNA mismatch repair protein MutL (669 aa).

Disordered regions lie at residues 354-402 and 448-479; these read NRPA…ENPY and TVSHDSPPNRTAPDATTSSSKPRAPIESPLES. Polar residues predominate over residues 448–468; the sequence is TVSHDSPPNRTAPDATTSSSK.

This sequence belongs to the DNA mismatch repair MutL/HexB family.

This protein is involved in the repair of mismatches in DNA. It is required for dam-dependent methyl-directed DNA mismatch repair. May act as a 'molecular matchmaker', a protein that promotes the formation of a stable complex between two or more DNA-binding proteins in an ATP-dependent manner without itself being part of a final effector complex. This Pectobacterium carotovorum subsp. carotovorum (strain PC1) protein is DNA mismatch repair protein MutL.